An 82-amino-acid polypeptide reads, in one-letter code: U17-hexatoxin-Hi1a (82 aa).

The first 21 residues, 1 to 21 (MKTIFAVTLLLFAIYVPECMP), serve as a signal peptide directing secretion. Disulfide bonds link cysteine 22–cysteine 33, cysteine 27–cysteine 48, cysteine 32–cysteine 61, cysteine 58–cysteine 69, and cysteine 63–cysteine 75.

Expressed by the venom gland.

Its subcellular location is the secreted. Probable ion channel inhibitor. This is U17-hexatoxin-Hi1a from Hadronyche infensa (Fraser island funnel-web spider).